The following is a 156-amino-acid chain: Small ribosomal subunit protein uS7 (156 aa).

The protein belongs to the universal ribosomal protein uS7 family. As to quaternary structure, part of the 30S ribosomal subunit. Contacts proteins S9 and S11.

In terms of biological role, one of the primary rRNA binding proteins, it binds directly to 16S rRNA where it nucleates assembly of the head domain of the 30S subunit. Is located at the subunit interface close to the decoding center, probably blocks exit of the E-site tRNA. This is Small ribosomal subunit protein uS7 from Halalkalibacterium halodurans (strain ATCC BAA-125 / DSM 18197 / FERM 7344 / JCM 9153 / C-125) (Bacillus halodurans).